The following is a 437-amino-acid chain: 3-phosphoshikimate 1-carboxyvinyltransferase (437 aa).

The 3-phosphoshikimate site is built by Lys22, Ser23, and Arg27. Lys22 is a phosphoenolpyruvate binding site. Phosphoenolpyruvate-binding residues include Gly96 and Arg125. Residues Ser170, Gln172, Asp323, and Lys350 each contribute to the 3-phosphoshikimate site. A phosphoenolpyruvate-binding site is contributed by Gln172. Asp323 serves as the catalytic Proton acceptor. Positions 354 and 396 each coordinate phosphoenolpyruvate.

It belongs to the EPSP synthase family. In terms of assembly, monomer.

The protein localises to the cytoplasm. The catalysed reaction is 3-phosphoshikimate + phosphoenolpyruvate = 5-O-(1-carboxyvinyl)-3-phosphoshikimate + phosphate. It participates in metabolic intermediate biosynthesis; chorismate biosynthesis; chorismate from D-erythrose 4-phosphate and phosphoenolpyruvate: step 6/7. Catalyzes the transfer of the enolpyruvyl moiety of phosphoenolpyruvate (PEP) to the 5-hydroxyl of shikimate-3-phosphate (S3P) to produce enolpyruvyl shikimate-3-phosphate and inorganic phosphate. In Synechococcus sp. (strain RCC307), this protein is 3-phosphoshikimate 1-carboxyvinyltransferase.